A 156-amino-acid polypeptide reads, in one-letter code: Transcription factor MafF (156 aa).

Positions 51–76 (RLKQRRRTLKNRGYAASCRVKRVCQK) are basic motif. In terms of domain architecture, bZIP spans 51–114 (RLKQRRRTLK…DALRGKCEAL (64 aa)). Residues 79 to 93 (LQKQKSELEREVDKL) are leucine-zipper.

Belongs to the bZIP family. Maf subfamily. Monomer and homo- or heterodimer. Interacts with MIP. Forms high affinity heterodimers with members of the CNC-bZIP family such as NFE2L1/NRF1. As to expression, highly expressed in the lung, lower expression in the brain, thymus, liver, spleen, intestine, kidney, heart, muscle, and ovary. Not significantly expressed in hematopoietic cells.

The protein localises to the nucleus. Its function is as follows. Since they lack a putative transactivation domain, the small Mafs behave as transcriptional repressors when they dimerize among themselves. However, they seem to serve as transcriptional activators by dimerizing with other (usually larger) basic-zipper proteins, such as NFE2L1/NRF1, and recruiting them to specific DNA-binding sites. Interacts with the upstream promoter region of the oxytocin receptor gene. May be a transcriptional enhancer in the up-regulation of the oxytocin receptor gene at parturition. The sequence is that of Transcription factor MafF (Maff) from Mus musculus (Mouse).